The chain runs to 268 residues: Oxygen-evolving enhancer protein 2-1, chloroplastic (268 aa).

A chloroplast-targeting transit peptide spans 1–82 (MASTQCFLHQ…IGSKVSPADA (82 aa)).

Belongs to the PsbP family.

It localises to the plastid. It is found in the chloroplast thylakoid membrane. In terms of biological role, may be involved in the regulation of photosystem II. The polypeptide is Oxygen-evolving enhancer protein 2-1, chloroplastic (PSBP1) (Nicotiana tabacum (Common tobacco)).